We begin with the raw amino-acid sequence, 829 residues long: Periplasmic nitrate reductase (829 aa).

The signal sequence occupies residues 1-30 (MNSPRPTPPPFAAAAAGLPILVRASNLVTE). The region spanning 36 to 92 (LVWNKAPCRFCGTGCSVMVATRDGQVVATHGDIKAEVNRGINCVKGYFLSKIMYGSD) is the 4Fe-4S Mo/W bis-MGD-type domain. C43, C46, C50, and C78 together coordinate [4Fe-4S] cluster. Residues K80, Q147, N172, C176, 209–216 (WGSNMAEM), 240–244 (STFEH), 259–261 (QTD), M370, Q374, N480, 506–507 (SD), K529, D556, and 716–725 (TGRVLEHWHT) each bind Mo-bis(molybdopterin guanine dinucleotide). Substrate is bound at residue F792. N800 and K817 together coordinate Mo-bis(molybdopterin guanine dinucleotide).

The protein belongs to the prokaryotic molybdopterin-containing oxidoreductase family. NasA/NapA/NarB subfamily. As to quaternary structure, component of the periplasmic nitrate reductase NapAB complex composed of NapA and NapB. It depends on [4Fe-4S] cluster as a cofactor. Mo-bis(molybdopterin guanine dinucleotide) is required as a cofactor.

Its subcellular location is the periplasm. It catalyses the reaction 2 Fe(II)-[cytochrome] + nitrate + 2 H(+) = 2 Fe(III)-[cytochrome] + nitrite + H2O. Functionally, catalytic subunit of the periplasmic nitrate reductase complex NapAB. Receives electrons from NapB and catalyzes the reduction of nitrate to nitrite. This chain is Periplasmic nitrate reductase, found in Pseudomonas aeruginosa (strain ATCC 15692 / DSM 22644 / CIP 104116 / JCM 14847 / LMG 12228 / 1C / PRS 101 / PAO1).